The primary structure comprises 56 residues: Preprotein translocase subunit SecG (56 aa).

The Cytoplasmic portion of the chain corresponds to 1–29; it reads MAKDKTTLPPTGAGLMRFFDEDTRAIKVS. The chain crosses the membrane as a helical span at residues 30-51; it reads PKGVIAIVLVLIAFEVFLHLFG. Residues 52 to 56 are Extracellular-facing; it reads PSIFG.

This sequence belongs to the SEC61-beta family. Component of the protein translocase complex. Heterotrimer consisting of alpha (SecY), beta (SecG) and gamma (SecE) subunits. Can form oligomers of the heterotrimer.

Its subcellular location is the cell membrane. Involved in protein export. The function of the beta subunit is unknown, but it may be involved in stabilization of the trimeric complex. The polypeptide is Preprotein translocase subunit SecG (Thermococcus gammatolerans (strain DSM 15229 / JCM 11827 / EJ3)).